The chain runs to 320 residues: Ferrochelatase (320 aa).

Fe cation is bound by residues histidine 194 and glutamate 275.

It belongs to the ferrochelatase family.

The protein localises to the cytoplasm. The enzyme catalyses heme b + 2 H(+) = protoporphyrin IX + Fe(2+). It functions in the pathway porphyrin-containing compound metabolism; protoheme biosynthesis; protoheme from protoporphyrin-IX: step 1/1. In terms of biological role, catalyzes the ferrous insertion into protoporphyrin IX. This is Ferrochelatase from Serratia proteamaculans (strain 568).